The sequence spans 166 residues: Ribosome maturation factor RimM (166 aa).

Residues aspartate 91 to leucine 163 enclose the PRC barrel domain.

The protein belongs to the RimM family. As to quaternary structure, binds ribosomal protein uS19.

It is found in the cytoplasm. Functionally, an accessory protein needed during the final step in the assembly of 30S ribosomal subunit, possibly for assembly of the head region. Essential for efficient processing of 16S rRNA. May be needed both before and after RbfA during the maturation of 16S rRNA. It has affinity for free ribosomal 30S subunits but not for 70S ribosomes. The polypeptide is Ribosome maturation factor RimM (Corynebacterium diphtheriae (strain ATCC 700971 / NCTC 13129 / Biotype gravis)).